A 436-amino-acid polypeptide reads, in one-letter code: 3-ketoacyl-CoA thiolase (436 aa).

The active-site Acyl-thioester intermediate is cysteine 99. Residues histidine 392 and cysteine 422 each act as proton acceptor in the active site.

Belongs to the thiolase-like superfamily. Thiolase family. In terms of assembly, heterotetramer of two alpha chains (FadJ) and two beta chains (FadI).

The protein resides in the cytoplasm. It catalyses the reaction an acyl-CoA + acetyl-CoA = a 3-oxoacyl-CoA + CoA. It participates in lipid metabolism; fatty acid beta-oxidation. Functionally, catalyzes the final step of fatty acid oxidation in which acetyl-CoA is released and the CoA ester of a fatty acid two carbons shorter is formed. In Shewanella denitrificans (strain OS217 / ATCC BAA-1090 / DSM 15013), this protein is 3-ketoacyl-CoA thiolase.